Here is a 744-residue protein sequence, read N- to C-terminus: MPEDQAHAAMEEASPYSLLDICLSFLTTNLEKFCSARQDGTLCLQEPGVFPQEVADRLLQTIAFHGLLNDGTVGIFRGNQMRLKRACIRKAKISAVAFRKAFCHHKLVELDATGVNADITITDIISGLGSNKWIQQNLQCLVLNSLTLSLEDPYERCFSRLSGLRALSITNVLFYNEDLAEVASLPRLESLDISNTSITDITALLACKDRLKSLTMHHLKCLKMTTTQILDVVRELKHLNHLDISDDKQFTSDIALRLLEQKDILPNLVSLDVSGRKHVTDKAVEAFIQQRPSMQFVGLLATDAGYSEFLMGKGHLKVSGEANETQIAEALRRYSERAFFVREALFHLFSLTHVMEKTKPDILKLVVTGMRNHPMNLPVQLAASACVFNLTKQDLALGMPVRLLADVTHLLLKAMEHFPNHQQLQKNCLLSLCSDRILQDVPFNRFEAAKLVMQWLCNHEDQNMQRMAVAIISILAAKLSTEQTAQLGAELFIVRQLLQIVKQKTNQNSVDTTLKFTLSALWNLTDESPTTCRHFIENQGLELFMRVLESFPTESSIQQKVLGLLNNIAEVQELHSELMWKDFIDHISSLLHSVEVEVSYFAAGIIAHLISRGEQAWTLSRSQRNSLLDDLHSAILKWPTPECEMVAYRSFNPFFPLLGCFTTPGVQLWAVWAMQHVCSKNPSRYCSMLIEEGGLQHLYNIKEHEQTDPYVQQIAVAILDSLEKHIVRHGRPPPCKKQPQARLN.

LRR repeat units lie at residues 185–208, 216–236, and 237–261; these read LPRLESLDISNTSITDITALLACK, MHHLKCLKMTTTQILDVVREL, and KHLNHLDISDDKQFTSDIALRLLEQ.

It belongs to the zyg-11 family. As to quaternary structure, interacts with ELOC/Elongin C. Part of an E3 ubiquitin ligase complex including ZYG11B, CUL2 and Elongin BC.

In terms of biological role, serves as substrate adapter subunit in the E3 ubiquitin ligase complex ZYG11B-CUL2-Elongin BC. Acts redudantly with ZER1 to target substrates bearing N-terminal glycine degrons for proteasomal degradation. Involved in the clearance of proteolytic fragments generated by caspase cleavage during apoptosis since N-terminal glycine degrons are strongly enriched at caspase cleavage sites. Also important in the quality control of protein N-myristoylation in which N-terminal glycine degrons are conditionally exposed after a failure of N-myristoylation. The chain is Protein zyg-11 homolog B from Mus musculus (Mouse).